A 428-amino-acid chain; its full sequence is Glutamine synthetase leaf isozyme, chloroplastic (428 aa).

Residues 1 to 49 (MAQILAPSIQCQTRITKTSPLATPISSKMWSSLVMKQNKKVARSAKFRV) constitute a chloroplast transit peptide. The GS beta-grasp domain occupies 75 to 155 (IIAEYIWIGG…VICDAYTPQG (81 aa)). A GS catalytic domain is found at 159–428 (PTNKRHKAAE…LAAQKIALKV (270 aa)).

This sequence belongs to the glutamine synthetase family. In terms of assembly, homooctamer.

The protein resides in the plastid. It localises to the chloroplast. The enzyme catalyses L-glutamate + NH4(+) + ATP = L-glutamine + ADP + phosphate + H(+). In terms of biological role, the light-modulated chloroplast enzyme, encoded by a nuclear gene and expressed primarily in leaves, is responsible for the reassimilation of the ammonia generated by photorespiration. This chain is Glutamine synthetase leaf isozyme, chloroplastic (GS2), found in Medicago sativa (Alfalfa).